The sequence spans 141 residues: MSKALIKFIRLSPTKARLIAREVQGMNAELAMASLKFMPNKGAKYIANAISSAVANGGFEANEVIVKSCRVDAAAVLKRFRPRARGSASRIRKPTSHILVEVAKAEVKSEEKKTVAKKTTTTKAPAKKTTSTKKATVKKES.

The disordered stretch occupies residues 108–141; the sequence is KSEEKKTVAKKTTTTKAPAKKTTSTKKATVKKES. The span at 117–134 shows a compositional bias: low complexity; sequence KKTTTTKAPAKKTTSTKK.

It belongs to the universal ribosomal protein uL22 family. Part of the 50S ribosomal subunit.

Functionally, this protein binds specifically to 23S rRNA; its binding is stimulated by other ribosomal proteins, e.g. L4, L17, and L20. It is important during the early stages of 50S assembly. It makes multiple contacts with different domains of the 23S rRNA in the assembled 50S subunit and ribosome. In terms of biological role, the globular domain of the protein is located near the polypeptide exit tunnel on the outside of the subunit, while an extended beta-hairpin is found that lines the wall of the exit tunnel in the center of the 70S ribosome. The polypeptide is Large ribosomal subunit protein uL22 (Campylobacter jejuni subsp. jejuni serotype O:2 (strain ATCC 700819 / NCTC 11168)).